The following is a 145-amino-acid chain: Acidic phospholipase A2 homolog textilotoxin C chain (145 aa).

The N-terminal stretch at 1–19 (MHPAHLLVLLGVYVSLLGA) is a signal peptide. A propeptide spanning residues 20–27 (ARIPPLPL) is cleaved from the precursor. 7 disulfides stabilise this stretch: Cys-38–Cys-98, Cys-54–Cys-144, Cys-56–Cys-72, Cys-71–Cys-125, Cys-78–Cys-118, Cys-87–Cys-111, and Cys-105–Cys-116.

The protein belongs to the phospholipase A2 family. Group I subfamily. D49 sub-subfamily. As to quaternary structure, heterohexamer. 2 forms exist: 2 A or 2 B chains, 2 C chains and 2 covalently-linked D chains, and 1 A or 1 B, 1 C, 2 covalently-linked D chains and 2 differentially glycosylated covalently-linked D chains. Textilotoxin was originally described as pentameric. In terms of tissue distribution, expressed by the venom gland.

It localises to the secreted. In terms of biological role, snake venom oligomeric phospholipase A2 that has potent presynaptic neurotoxicity. Chain C is not itself neurotoxic, but it is essential for the neurotoxicity of textilotoxin. Chain C possesses a very low phospholipase activity. This Pseudonaja textilis (Eastern brown snake) protein is Acidic phospholipase A2 homolog textilotoxin C chain.